The sequence spans 836 residues: Enhancer of polycomb homolog 1 (836 aa).

Residue K319 forms a Glycyl lysine isopeptide (Lys-Gly) (interchain with G-Cter in SUMO2) linkage. 2 disordered regions span residues 335-360 (KRKY…SPAA) and 372-401 (YDFP…PDGP). Over residues 346–360 (PSSAAATPQQTSPAA) the composition is skewed to low complexity. S539 carries the post-translational modification Phosphoserine. A Glycyl lysine isopeptide (Lys-Gly) (interchain with G-Cter in SUMO2) cross-link involves residue K673. Residues 802–829 (VPSSSSVDSVPRENHESEKPALNNIADN) form a disordered region. The segment covering 811–820 (VPRENHESEK) has biased composition (basic and acidic residues).

It belongs to the enhancer of polycomb family. Component of the NuA4 histone acetyltransferase complex which contains the catalytic subunit KAT5/TIP60 and the subunits EP400, TRRAP/PAF400, BRD8/SMAP, EPC1, DMAP1/DNMAP1, RUVBL1/TIP49, RUVBL2, ING3, actin, ACTL6A/BAF53A, MORF4L1/MRG15, MORF4L2/MRGX, MRGBP, YEATS4/GAS41, VPS72/YL1 and MEAF6. KAT5/TIP60, EPC1, and ING3 together constitute a minimal HAT complex termed Piccolo NuA4. Component of a NuA4-related complex which contains EP400, TRRAP/PAF400, SRCAP, BRD8/SMAP, EPC1, DMAP1/DNMAP1, RUVBL1/TIP49, RUVBL2, actin, ACTL6A/BAF53A, VPS72 and YEATS4/GAS41. Interacts with TRIM27. Interacts with MBTD1; interaction is direct and promotes recruitment of MBTD1 into the NuA4 histone acetyltransferase complex.

It is found in the nucleus. Its subcellular location is the cytoplasm. Functionally, component of the NuA4 histone acetyltransferase (HAT) complex, a multiprotein complex involved in transcriptional activation of select genes principally by acetylation of nucleosomal histones H4 and H2A. The NuA4 complex plays a direct role in repair of DNA double-strand breaks (DSBs) by promoting homologous recombination (HR). The NuA4 complex is also required for spermatid development by promoting acetylation of histones: histone acetylation is required for histone replacement during the transition from round to elongating spermatids. In the NuA4 complex, EPC1 is required to recruit MBTD1 into the complex. The sequence is that of Enhancer of polycomb homolog 1 from Homo sapiens (Human).